We begin with the raw amino-acid sequence, 161 residues long: 3-isopropylmalate dehydratase small subunit (161 aa).

The protein belongs to the LeuD family. LeuD type 2 subfamily. Heterodimer of LeuC and LeuD.

It carries out the reaction (2R,3S)-3-isopropylmalate = (2S)-2-isopropylmalate. The protein operates within amino-acid biosynthesis; L-leucine biosynthesis; L-leucine from 3-methyl-2-oxobutanoate: step 2/4. Functionally, catalyzes the isomerization between 2-isopropylmalate and 3-isopropylmalate, via the formation of 2-isopropylmaleate. In Pyrobaculum calidifontis (strain DSM 21063 / JCM 11548 / VA1), this protein is 3-isopropylmalate dehydratase small subunit.